Consider the following 271-residue polypeptide: Shikimate dehydrogenase (NADP(+)) (271 aa).

Shikimate is bound by residues 16–18 (SRS) and Thr-63. The active-site Proton acceptor is the Lys-67. The shikimate site is built by Asn-88 and Asp-104. NADP(+)-binding positions include 128–132 (GAGGA), 152–157 (NRTASK), and Met-215. Tyr-217 serves as a coordination point for shikimate. Position 238 (Gly-238) interacts with NADP(+).

This sequence belongs to the shikimate dehydrogenase family. As to quaternary structure, homodimer.

The enzyme catalyses shikimate + NADP(+) = 3-dehydroshikimate + NADPH + H(+). It functions in the pathway metabolic intermediate biosynthesis; chorismate biosynthesis; chorismate from D-erythrose 4-phosphate and phosphoenolpyruvate: step 4/7. Involved in the biosynthesis of the chorismate, which leads to the biosynthesis of aromatic amino acids. Catalyzes the reversible NADPH linked reduction of 3-dehydroshikimate (DHSA) to yield shikimate (SA). This chain is Shikimate dehydrogenase (NADP(+)), found in Chromohalobacter salexigens (strain ATCC BAA-138 / DSM 3043 / CIP 106854 / NCIMB 13768 / 1H11).